Here is a 30-residue protein sequence, read N- to C-terminus: Cycloviolacin-O10 (30 aa).

A cross-link (cyclopeptide (Gly-Asn)) is located at residues Gly1 to Asn30. 3 cysteine pairs are disulfide-bonded: Cys4–Cys20, Cys8–Cys22, and Cys13–Cys27.

Post-translationally, this is a cyclic peptide. In terms of tissue distribution, expressed in petals and roots but not in leaves, petioles and runners (at protein level).

In terms of biological role, probably participates in a plant defense mechanism. This is Cycloviolacin-O10 from Viola odorata (Sweet violet).